Consider the following 621-residue polypeptide: Methionine--tRNA ligase (621 aa).

A 'HIGH' region motif is present at residues 11–21; that stretch reads PYANGPRHIGH. Positions 143, 146, 156, and 159 each coordinate Zn(2+). Positions 347-351 match the 'KMSKS' region motif; the sequence is KFSSS. Ser-350 provides a ligand contact to ATP.

Belongs to the class-I aminoacyl-tRNA synthetase family. MetG type 1 subfamily. In terms of assembly, monomer. Requires Zn(2+) as cofactor.

The protein localises to the cytoplasm. It catalyses the reaction tRNA(Met) + L-methionine + ATP = L-methionyl-tRNA(Met) + AMP + diphosphate. Functionally, is required not only for elongation of protein synthesis but also for the initiation of all mRNA translation through initiator tRNA(fMet) aminoacylation. The protein is Methionine--tRNA ligase of Bifidobacterium longum (strain NCC 2705).